A 505-amino-acid polypeptide reads, in one-letter code: Dolichyl pyrophosphate Glc1Man9GlcNAc2 alpha-1,3-glucosyltransferase (505 aa).

Topologically, residues 1-3 (MAE) are lumenal. A helical transmembrane segment spans residues 4–24 (IYPSLVQCAIVATAFKVLLFP). Residues 25 to 101 (AYKSTDFEVH…DSWQTVYFQR (77 aa)) lie on the Cytoplasmic side of the membrane. A helical membrane pass occupies residues 102–122 (WTVIVTELVLLYALQMFVDST). Residues 123 to 128 (PGVSKR) are Lumenal-facing. A helical transmembrane segment spans residues 129-149 (AAHAAAVSILLSPGLLIIDHI). Residues 150–152 (HFQ) are Cytoplasmic-facing. Residues 153 to 169 (YNGVMYGILIASLVLAK) form a helical membrane-spanning segment. At 170-173 (KKSS) the chain is on the lumenal side. The helical transmembrane segment at 174–194 (LLASGLVFAALLCMKHIYLYL) threads the bilayer. Residues 195-224 (APAYFVYLLRVYCLPPKLSPRSIFRIQFFN) are Cytoplasmic-facing. The helical transmembrane segment at 225–245 (CVKLGGGIAAIFAAAFGPFAL) threads the bilayer. Residues 246-319 (KNQIPQIFSR…TSFAVLPDIT (74 aa)) are Lumenal-facing. The helical transmembrane segment at 320–340 (PRMCFVLTLLFQAIPLIKLFM) threads the bilayer. At 341-359 (RPTWEGFIGGVTLCGYASF) the chain is on the cytoplasmic side. A helical membrane pass occupies residues 360-380 (LFGWHVHEKAILLVIIPFSLI). The Lumenal portion of the chain corresponds to 381–386 (ALKDRR). The chain crosses the membrane as a helical span at residues 387-407 (YLGAFRPLAVAGHVSLFPLIF). Residues 408–409 (TP) are Cytoplasmic-facing. Residues 410–430 (AEFPIKTVYTIFWLVLFLMAF) form a helical membrane-spanning segment. The Lumenal portion of the chain corresponds to 431 to 450 (DRLAPAPTRQRLFLFDRFST). Residues 451-471 (AYITVSIPLIFYCSLMHGIIF) form a helical membrane-spanning segment. Residues 472-480 (GKSYEFLPL) are Cytoplasmic-facing. Residues 481-501 (MFTSSYSAIGVVGSWLGFMVV) traverse the membrane as a helical segment. Topologically, residues 502–505 (YFTE) are lumenal.

Belongs to the ALG6/ALG8 glucosyltransferase family.

Its subcellular location is the endoplasmic reticulum membrane. The enzyme catalyses an alpha-D-Glc-(1-&gt;3)-alpha-D-Man-(1-&gt;2)-alpha-D-Man-(1-&gt;2)-alpha-D-Man-(1-&gt;3)-[alpha-D-Man-(1-&gt;2)-alpha-D-Man-(1-&gt;3)-[alpha-D-Man-(1-&gt;2)-alpha-D-Man-(1-&gt;6)]-alpha-D-Man-(1-&gt;6)]-beta-D-Man-(1-&gt;4)-beta-D-GlcNAc-(1-&gt;4)-alpha-D-GlcNAc-diphospho-di-trans,poly-cis-dolichol + a di-trans,poly-cis-dolichyl beta-D-glucosyl phosphate = an alpha-D-Glc-(1-&gt;3)-alpha-D-Glc-(1-&gt;3)-alpha-D-Man-(1-&gt;2)-alpha-D-Man-(1-&gt;2)-alpha-D-Man-(1-&gt;3)-[alpha-D-Man-(1-&gt;2)-alpha-D-Man-(1-&gt;3)-[alpha-D-Man-(1-&gt;2)-alpha-D-Man-(1-&gt;6)]-alpha-D-Man-(1-&gt;6)]-beta-D-Man-(1-&gt;4)-beta-D-GlcNAc-(1-&gt;4)-alpha-D-GlcNAc-diphospho-di-trans,poly-cis-dolichol + a di-trans,poly-cis-dolichyl phosphate + H(+). Its pathway is protein modification; protein glycosylation. Its function is as follows. Dolichyl pyrophosphate Glc1Man9GlcNAc2 alpha-1,3-glucosyltransferase that operates in the biosynthetic pathway of dolichol-linked oligosaccharides, the glycan precursors employed in protein asparagine (N)-glycosylation. The assembly of dolichol-linked oligosaccharides begins on the cytosolic side of the endoplasmic reticulum membrane and finishes in its lumen. The sequential addition of sugars to dolichol pyrophosphate produces dolichol-linked oligosaccharides containing fourteen sugars, including two GlcNAcs, nine mannoses and three glucoses. Once assembled, the oligosaccharide is transferred from the lipid to nascent proteins by oligosaccharyltransferases. In the lumen of the endoplasmic reticulum, adds the second glucose residue from dolichyl phosphate glucose (Dol-P-Glc) onto the lipid-linked oligosaccharide intermediate Glc(1)Man(9)GlcNAc(2)-PP-Dol to produce Glc(2)Man(9)GlcNAc(2)-PP-Dol. This chain is Dolichyl pyrophosphate Glc1Man9GlcNAc2 alpha-1,3-glucosyltransferase (alg-8), found in Neurospora crassa (strain ATCC 24698 / 74-OR23-1A / CBS 708.71 / DSM 1257 / FGSC 987).